Reading from the N-terminus, the 433-residue chain is Hps1-dma1 cluster O-methyltransferase (433 aa).

The tract at residues 36–55 (NGHPERSLNSTDSVRLSDAP) is disordered. An S-adenosyl-L-methionine-binding site is contributed by D285. Catalysis depends on H331, which acts as the Proton acceptor.

This sequence belongs to the class I-like SAM-binding methyltransferase superfamily. Cation-independent O-methyltransferase family. COMT subfamily.

It functions in the pathway secondary metabolite biosynthesis. In terms of biological role, O-methyltransferase; part of the hps1-dma1 gene cluster that probably mediates the biosynthesis a derivative of cyclopiazonic acid (CPA). The hybrid polyketide synthase-nonribosomal peptide synthetase (PKS-NRPS) nps1 might incorporates acetyl-CoA, malonyl-CoA, and tryptophan (Trp) and utilizes a C-terminal redox-incompetent reductase domain to make and release the tryptophan tetramic acid, cyclo-acetoacetyl-L-tryptophan (c-AATrp), as the first intermediate in the pathway. In addition, the cluster also includes the tryptophan dimethylallyltransferase dma1, the FAD-dependent oxidoreductase toxD, the cytochrome P450 monooxygenase cyp3.1 and the methyltransferase DOTSEDRAFT_139328; the latter 2 being not present in all CPA-producing fungi but involved in additional modifications that occur in biosynthesis the of a range of CPA and CPA-like products. Further studies are required to clarify whether the CPA-like hps1-dma1 cluster is functional or a non-functional relic reflecting evolution of D.septosporum. This Dothistroma septosporum (strain NZE10 / CBS 128990) (Red band needle blight fungus) protein is Hps1-dma1 cluster O-methyltransferase.